A 716-amino-acid chain; its full sequence is Photosystem I P700 chlorophyll a apoprotein A1 (716 aa).

Helical transmembrane passes span valine 57–alanine 80, leucine 143–histidine 166, leucine 182–leucine 206, threonine 278–tyrosine 296, tryptophan 333–tyrosine 356, leucine 372–valine 398, alanine 420–histidine 442, and phenylalanine 518–leucine 536. [4Fe-4S] cluster-binding residues include cysteine 560 and cysteine 569. 2 helical membrane passes run histidine 576–tryptophan 597 and leucine 651–phenylalanine 673. Residue histidine 662 participates in chlorophyll a' binding. Chlorophyll a is bound by residues methionine 670 and tyrosine 678. Tryptophan 679 is a phylloquinone binding site. The helical transmembrane segment at alanine 711–histidine 716 threads the bilayer.

It belongs to the PsaA/PsaB family. The PsaA/B heterodimer binds the P700 chlorophyll special pair and subsequent electron acceptors. PSI consists of a core antenna complex that captures photons, and an electron transfer chain that converts photonic excitation into a charge separation. The eukaryotic PSI reaction center is composed of at least 11 subunits. P700 is a chlorophyll a/chlorophyll a' dimer, A0 is one or more chlorophyll a, A1 is one or both phylloquinones and FX is a shared 4Fe-4S iron-sulfur center. is required as a cofactor.

Its subcellular location is the plastid. The protein localises to the chloroplast thylakoid membrane. It catalyses the reaction reduced [plastocyanin] + hnu + oxidized [2Fe-2S]-[ferredoxin] = oxidized [plastocyanin] + reduced [2Fe-2S]-[ferredoxin]. Functionally, psaA and PsaB bind P700, the primary electron donor of photosystem I (PSI), as well as the electron acceptors A0, A1 and FX. PSI is a plastocyanin-ferredoxin oxidoreductase, converting photonic excitation into a charge separation, which transfers an electron from the donor P700 chlorophyll pair to the spectroscopically characterized acceptors A0, A1, FX, FA and FB in turn. Oxidized P700 is reduced on the lumenal side of the thylakoid membrane by plastocyanin. The protein is Photosystem I P700 chlorophyll a apoprotein A1 of Araucaria araucana (Monkey-puzzle tree).